Here is a 1219-residue protein sequence, read N- to C-terminus: DNA ligase 4 (1219 aa).

ATP contacts are provided by Glu251, Lys253, Arg258, Arg273, Glu303, Phe342, Glu418, Lys423, Arg434, Lys440, and Lys442. Lys253 acts as the N6-AMP-lysine intermediate in catalysis. Glu303 provides a ligand contact to Mg(2+). Residue Glu418 coordinates Mg(2+). The segment at 604–632 (NGTTQKQKESESTQDNPKVNKSSKRGEKK) is disordered. 2 BRCT domains span residues 651–739 (GKTS…PKYF) and 807–909 (VYFY…VYTL). Disordered stretches follow at residues 914 to 1126 (MEES…MDMK) and 1146 to 1197 (IPSQ…SDVV). Polar residues predominate over residues 932–960 (VASQGSAQTKEPASSKIAITSSRGRSNTR). The span at 1042–1051 (QRSRRGKKAA) shows a compositional bias: basic residues. The span at 1056 to 1065 (DESDENDELD) shows a compositional bias: acidic residues. 2 stretches are compositionally biased toward basic and acidic residues: residues 1084-1096 (VENE…DIAK) and 1117-1126 (RNAKTEMDMK). The segment covering 1148–1159 (SQKTTETSNRTT) has biased composition (polar residues).

It belongs to the ATP-dependent DNA ligase family. In terms of assembly, interacts with XRCC4 via its tandem BRCT domains. Interacts with POLL. Mg(2+) serves as cofactor. As to expression, widely expressed, with higher levels in young flowers and roots.

Its subcellular location is the nucleus. It carries out the reaction ATP + (deoxyribonucleotide)n-3'-hydroxyl + 5'-phospho-(deoxyribonucleotide)m = (deoxyribonucleotide)n+m + AMP + diphosphate.. Its function is as follows. DNA ligase involved in DNA non-homologous end joining (NHEJ); required for double-strand break (DSB) repair. May be involved for T-DNA integration even if not absolutely required. Seems to be dispensable under normal growth conditions. The polypeptide is DNA ligase 4 (LIG4) (Arabidopsis thaliana (Mouse-ear cress)).